The primary structure comprises 124 residues: Small ribosomal subunit protein uS13c (124 aa).

Residues 100-124 are disordered; sequence GQRTRTNARTRKGKVKTAVAKKKGR. The segment covering 101-124 has biased composition (basic residues); that stretch reads QRTRTNARTRKGKVKTAVAKKKGR.

It belongs to the universal ribosomal protein uS13 family. In terms of assembly, part of the 30S ribosomal subunit.

Its subcellular location is the plastid. It localises to the chloroplast. Functionally, located at the top of the head of the 30S subunit, it contacts several helices of the 16S rRNA. The protein is Small ribosomal subunit protein uS13c of Emiliania huxleyi (Coccolithophore).